Reading from the N-terminus, the 102-residue chain is Small ribosomal subunit protein uS10 (102 aa).

Belongs to the universal ribosomal protein uS10 family. As to quaternary structure, part of the 30S ribosomal subunit.

Involved in the binding of tRNA to the ribosomes. This is Small ribosomal subunit protein uS10 from Streptococcus uberis (strain ATCC BAA-854 / 0140J).